Here is a 198-residue protein sequence, read N- to C-terminus: Holliday junction branch migration complex subunit RuvA (198 aa).

Residues 1–64 (MYEYIKGEYM…EDFIGLYGFE (64 aa)) form a domain I region. Residues 65 to 143 (SLEELEMFKM…TDELLNCIDE (79 aa)) form a domain II region. Positions 144–154 (FDDVTQDNSLA) are flexible linker. The tract at residues 154–198 (AVSEALSALISLGYTEKEAEKVLRDVDKSESVENIIKSALVKLMG) is domain III.

This sequence belongs to the RuvA family. In terms of assembly, homotetramer. Forms an RuvA(8)-RuvB(12)-Holliday junction (HJ) complex. HJ DNA is sandwiched between 2 RuvA tetramers; dsDNA enters through RuvA and exits via RuvB. An RuvB hexamer assembles on each DNA strand where it exits the tetramer. Each RuvB hexamer is contacted by two RuvA subunits (via domain III) on 2 adjacent RuvB subunits; this complex drives branch migration. In the full resolvosome a probable DNA-RuvA(4)-RuvB(12)-RuvC(2) complex forms which resolves the HJ.

It localises to the cytoplasm. In terms of biological role, the RuvA-RuvB-RuvC complex processes Holliday junction (HJ) DNA during genetic recombination and DNA repair, while the RuvA-RuvB complex plays an important role in the rescue of blocked DNA replication forks via replication fork reversal (RFR). RuvA specifically binds to HJ cruciform DNA, conferring on it an open structure. The RuvB hexamer acts as an ATP-dependent pump, pulling dsDNA into and through the RuvAB complex. HJ branch migration allows RuvC to scan DNA until it finds its consensus sequence, where it cleaves and resolves the cruciform DNA. This chain is Holliday junction branch migration complex subunit RuvA, found in Clostridium botulinum (strain Eklund 17B / Type B).